A 432-amino-acid chain; its full sequence is Asparagine--tRNA ligase (432 aa).

The protein belongs to the class-II aminoacyl-tRNA synthetase family. As to quaternary structure, homodimer.

The protein localises to the cytoplasm. The enzyme catalyses tRNA(Asn) + L-asparagine + ATP = L-asparaginyl-tRNA(Asn) + AMP + diphosphate + H(+). The protein is Asparagine--tRNA ligase of Lactobacillus helveticus (strain DPC 4571).